The following is a 202-amino-acid chain: Large ribosomal subunit protein eL13 (202 aa).

Belongs to the eukaryotic ribosomal protein eL13 family.

The polypeptide is Large ribosomal subunit protein eL13 (RPL13) (Nicotiana tabacum (Common tobacco)).